Reading from the N-terminus, the 414-residue chain is MNPSVPKVMKRENNTHLLVSKEMNDTSLQLPSTTRSLSPKESNSNEDFNVDGNETTLQRISKDYLKPNIGLVLLTVSYFFNSAMVVSTKVLENDPDDIANDRQIKPLQILLVRMVITYIGTLIYMYINKSTISDVPFGKPEVRKWLVLRGCTGFFGVFGMYYSLMYLTISDAVLITFLAPSLTIFLSWVILRERFTKVEALGSLISLLGVVLIVRPSFLFGTPELTDSSSQIVESSDPKSRLIATLVGLWGVLGMSCVYIIIRYIGKRAHAIMSVSYFSLITAIVSFIGINTIPSMKFQIPHSKKQWILFGNLGVSGFIFQLLLTMGIQRERAGRGSLMTYTQLLYAVFWDVALYKHWPNIWSWIGMIIIISATLWVIRIRAANNETTAKDLTPIIDDEENSIPLTEFDLSDSK.

Over 1-66 the chain is Lumenal; it reads MNPSVPKVMK…LQRISKDYLK (66 aa). The tract at residues 20–51 is disordered; that stretch reads SKEMNDTSLQLPSTTRSLSPKESNSNEDFNVD. Over residues 25–51 the composition is skewed to polar residues; it reads DTSLQLPSTTRSLSPKESNSNEDFNVD. K40 participates in a covalent cross-link: Glycyl lysine isopeptide (Lys-Gly) (interchain with G-Cter in ubiquitin). A helical membrane pass occupies residues 67 to 87; sequence PNIGLVLLTVSYFFNSAMVVS. In terms of domain architecture, EamA 1 spans 78-215; that stretch reads YFFNSAMVVS…SLLGVVLIVR (138 aa). The Cytoplasmic portion of the chain corresponds to 88-106; it reads TKVLENDPDDIANDRQIKP. A helical membrane pass occupies residues 107–127; it reads LQILLVRMVITYIGTLIYMYI. At 128–144 the chain is on the lumenal side; that stretch reads NKSTISDVPFGKPEVRK. A helical membrane pass occupies residues 145 to 167; it reads WLVLRGCTGFFGVFGMYYSLMYL. Residues 168–171 are Cytoplasmic-facing; it reads TISD. The chain crosses the membrane as a helical span at residues 172–191; the sequence is AVLITFLAPSLTIFLSWVIL. Over 192–199 the chain is Lumenal; it reads RERFTKVE. The chain crosses the membrane as a helical span at residues 200 to 220; it reads ALGSLISLLGVVLIVRPSFLF. Residues 221 to 241 are Cytoplasmic-facing; the sequence is GTPELTDSSSQIVESSDPKSR. A helical membrane pass occupies residues 242–262; the sequence is LIATLVGLWGVLGMSCVYIII. An EamA 2 domain is found at 253 to 379; the sequence is LGMSCVYIII…IISATLWVIR (127 aa). Residues 263 to 269 are Lumenal-facing; that stretch reads RYIGKRA. A helical transmembrane segment spans residues 270 to 290; that stretch reads HAIMSVSYFSLITAIVSFIGI. The Cytoplasmic portion of the chain corresponds to 291–307; it reads NTIPSMKFQIPHSKKQW. A helical membrane pass occupies residues 308–328; sequence ILFGNLGVSGFIFQLLLTMGI. Over 329–357 the chain is Lumenal; it reads QRERAGRGSLMTYTQLLYAVFWDVALYKH. Residues 358 to 378 form a helical membrane-spanning segment; sequence WPNIWSWIGMIIIISATLWVI. Over 379–414 the chain is Cytoplasmic; it reads RIRAANNETTAKDLTPIIDDEENSIPLTEFDLSDSK.

This sequence to yeast YPL264c.

It localises to the membrane. This is an uncharacterized protein from Saccharomyces cerevisiae (strain ATCC 204508 / S288c) (Baker's yeast).